A 218-amino-acid chain; its full sequence is Phosphoglycolate phosphatase (218 aa).

Residue Asp7 is the Nucleophile of the active site. Asp7, Asp9, and Asp167 together coordinate Mg(2+).

This sequence belongs to the HAD-like hydrolase superfamily. CbbY/CbbZ/Gph/YieH family. The cofactor is Mg(2+).

The catalysed reaction is 2-phosphoglycolate + H2O = glycolate + phosphate. Its pathway is organic acid metabolism; glycolate biosynthesis; glycolate from 2-phosphoglycolate: step 1/1. Functionally, specifically catalyzes the dephosphorylation of 2-phosphoglycolate. Is involved in the dissimilation of the intracellular 2-phosphoglycolate formed during the DNA repair of 3'-phosphoglycolate ends, a major class of DNA lesions induced by oxidative stress. The sequence is that of Phosphoglycolate phosphatase from Cereibacter sphaeroides (strain ATCC 17025 / ATH 2.4.3) (Rhodobacter sphaeroides).